Reading from the N-terminus, the 396-residue chain is S-adenosylmethionine synthase (396 aa).

Residue His16 coordinates ATP. Mg(2+) is bound at residue Asp18. Glu44 contacts K(+). Residues Glu57 and Gln100 each contribute to the L-methionine site. Residues Gln100–Asn110 are flexible loop. ATP-binding positions include Asp162–Lys164, Asp237, Arg243–Lys244, Ala260, and Lys264. Residue Asp237 coordinates L-methionine. Lys268 contacts L-methionine.

This sequence belongs to the AdoMet synthase family. Homotetramer; dimer of dimers. The cofactor is Mg(2+). K(+) serves as cofactor.

It is found in the cytoplasm. It carries out the reaction L-methionine + ATP + H2O = S-adenosyl-L-methionine + phosphate + diphosphate. It functions in the pathway amino-acid biosynthesis; S-adenosyl-L-methionine biosynthesis; S-adenosyl-L-methionine from L-methionine: step 1/1. In terms of biological role, catalyzes the formation of S-adenosylmethionine (AdoMet) from methionine and ATP. The overall synthetic reaction is composed of two sequential steps, AdoMet formation and the subsequent tripolyphosphate hydrolysis which occurs prior to release of AdoMet from the enzyme. The chain is S-adenosylmethionine synthase from Myxococcus xanthus.